A 376-amino-acid chain; its full sequence is CYP enzymes assisting alcohol dehydrogenase (376 aa).

Residues cysteine 43, threonine 45, histidine 64, cysteine 94, cysteine 97, cysteine 100, cysteine 108, and cysteine 173 each coordinate Zn(2+). Threonine 45 contacts NAD(+). Substrate-binding residues include threonine 45 and histidine 64. Residues 199-204, aspartate 223, lysine 228, 294-296, phenylalanine 320, and lysine 371 each bind NAD(+); these read GLGAVG and LGA.

It belongs to the zinc-containing alcohol dehydrogenase family. Class-III subfamily. As to quaternary structure, homodimer. Zn(2+) is required as a cofactor.

Its pathway is alkaloid biosynthesis. Functionally, may be a positive catalyzer of strictosidine production by assisting secologanin biosynthesis, thus being involved in monoterpene indole alkaloids accumulation. This chain is CYP enzymes assisting alcohol dehydrogenase, found in Catharanthus roseus (Madagascar periwinkle).